We begin with the raw amino-acid sequence, 249 residues long: Phosphate import ATP-binding protein PstB 3 (249 aa).

The 241-residue stretch at 4–244 (LVINNLDLYY…PQDERTENYI (241 aa)) folds into the ABC transporter domain. 36-43 (GPSGCGKS) contributes to the ATP binding site.

It belongs to the ABC transporter superfamily. Phosphate importer (TC 3.A.1.7) family. The complex is composed of two ATP-binding proteins (PstB), two transmembrane proteins (PstC and PstA) and a solute-binding protein (PstS).

It localises to the cell membrane. The catalysed reaction is phosphate(out) + ATP + H2O = ADP + 2 phosphate(in) + H(+). Its function is as follows. Part of the ABC transporter complex PstSACB involved in phosphate import. Responsible for energy coupling to the transport system. This Streptococcus agalactiae serotype Ia (strain ATCC 27591 / A909 / CDC SS700) protein is Phosphate import ATP-binding protein PstB 3.